A 603-amino-acid polypeptide reads, in one-letter code: Sulfite reductase [NADPH] flavoprotein alpha-component (603 aa).

In terms of domain architecture, Flavodoxin-like spans 64–202 (ITLISASQTG…QAETWRAAIV (139 aa)). Residues 70–75 (SQTGNA), 117–120 (STQG), and 153–162 (LGDSSYEHFA) each bind FMN. The FAD-binding FR-type domain occupies 236 to 452 (EAPLTAHLAL…IEHNDNFRLP (217 aa)). FAD-binding positions include Thr-326, Leu-360, 390–393 (RLYS), 408–410 (TVG), Tyr-414, and 423–426 (GGAS). NADP(+)-binding positions include 523-524 (SR), 529-533 (KIYVQ), and Asp-565. Tyr-603 provides a ligand contact to FAD.

It belongs to the NADPH-dependent sulphite reductase flavoprotein subunit CysJ family. The protein in the N-terminal section; belongs to the flavodoxin family. In the C-terminal section; belongs to the flavoprotein pyridine nucleotide cytochrome reductase family. As to quaternary structure, alpha(8)-beta(8). The alpha component is a flavoprotein, the beta component is a hemoprotein. FAD is required as a cofactor. The cofactor is FMN.

It carries out the reaction hydrogen sulfide + 3 NADP(+) + 3 H2O = sulfite + 3 NADPH + 4 H(+). It functions in the pathway sulfur metabolism; hydrogen sulfide biosynthesis; hydrogen sulfide from sulfite (NADPH route): step 1/1. Functionally, component of the sulfite reductase complex that catalyzes the 6-electron reduction of sulfite to sulfide. This is one of several activities required for the biosynthesis of L-cysteine from sulfate. The flavoprotein component catalyzes the electron flow from NADPH -&gt; FAD -&gt; FMN to the hemoprotein component. This Sodalis glossinidius (strain morsitans) protein is Sulfite reductase [NADPH] flavoprotein alpha-component.